The chain runs to 122 residues: Large ribosomal subunit protein uL22 (122 aa).

A disordered region spans residues 103 to 122 (VEGKEMKSSKSHKKNQAEGK).

This sequence belongs to the universal ribosomal protein uL22 family. Part of the 50S ribosomal subunit.

Its function is as follows. This protein binds specifically to 23S rRNA; its binding is stimulated by other ribosomal proteins, e.g. L4, L17, and L20. It is important during the early stages of 50S assembly. It makes multiple contacts with different domains of the 23S rRNA in the assembled 50S subunit and ribosome. The globular domain of the protein is located near the polypeptide exit tunnel on the outside of the subunit, while an extended beta-hairpin is found that lines the wall of the exit tunnel in the center of the 70S ribosome. This Helicobacter pylori (strain P12) protein is Large ribosomal subunit protein uL22.